The chain runs to 123 residues: Large ribosomal subunit protein uL14c (123 aa).

It belongs to the universal ribosomal protein uL14 family. In terms of assembly, part of the 50S ribosomal subunit.

Its subcellular location is the plastid. It localises to the chloroplast. In terms of biological role, binds to 23S rRNA. The chain is Large ribosomal subunit protein uL14c from Triticum aestivum (Wheat).